Reading from the N-terminus, the 381-residue chain is Putative acetyl-CoA C-acetyltransferase VraB (381 aa).

Cys86 acts as the Acyl-thioester intermediate in catalysis. His338 serves as the catalytic Proton acceptor.

It belongs to the thiolase-like superfamily. Thiolase family.

This chain is Putative acetyl-CoA C-acetyltransferase VraB (vraB), found in Staphylococcus haemolyticus (strain JCSC1435).